A 254-amino-acid chain; its full sequence is C-X-C motif chemokine 16 (254 aa).

The N-terminal stretch at 1-29 is a signal peptide; the sequence is MGRDLRPGSRVLLLLLLLLLVYLTQPGNG. Over 30–205 the chain is Extracellular; it reads NEGSVTGSCY…AGPTARTSAT (176 aa). The chemokine stretch occupies residues 32–107; sequence GSVTGSCYCG…DLKECGHAYS (76 aa). Cystine bridges form between cysteine 38–cysteine 68 and cysteine 40–cysteine 82. A disordered region spans residues 146–165; that stretch reads QSTQRPTLPVGSLSSDKELT. N-linked (GlcNAc...) asparagine glycosylation is present at asparagine 168. The segment at 178 to 200 is disordered; the sequence is SLAAGPEAGENQKQPEKNAGPTA. Residues 206–226 form a helical membrane-spanning segment; sequence VPVLCLLAIIFILTAALSYVL. Over 227–254 the chain is Cytoplasmic; it reads CKRRRGQSPQSSPDLPVHYIPVAPDSNT. The interval 231 to 254 is disordered; that stretch reads RGQSPQSSPDLPVHYIPVAPDSNT.

Belongs to the intercrine alpha (chemokine CxC) family. In terms of processing, glycosylated. As to expression, expressed in T-cell areas. Expressed in spleen, lymph nodes, lung, kidney, small intestine and thymus. Weak expression in heart and liver and no expression in brain and bone marrow.

It localises to the cell membrane. The protein resides in the secreted. In terms of biological role, acts as a scavenger receptor on macrophages, which specifically binds to OxLDL (oxidized low density lipoprotein), suggesting that it may be involved in pathophysiology such as atherogenesis. Induces a strong chemotactic response. Induces calcium mobilization. Binds to CXCR6/Bonzo. This Homo sapiens (Human) protein is C-X-C motif chemokine 16 (CXCL16).